The following is a 735-amino-acid chain: Serine/threonine-protein kinase BRSK2 (735 aa).

Residues 20-271 enclose the Protein kinase domain; the sequence is YRLEKTLGKG…LEHIQKHIWY (252 aa). ATP contacts are provided by residues 26 to 34 and Lys49; that span reads LGKGQTGLV. Asp142 serves as the catalytic Proton acceptor. Position 175 is a phosphothreonine; by LKB1 (Thr175). Thr261 carries the post-translational modification Phosphothreonine; by PKA. Residue Ser295 is modified to Phosphoserine. The UBA domain occupies 298-340; sequence DIDPDVLDSMHSLGCFRDRNKLLQDLLSEEENQEKMIYFLLLD. Residues 346–367 are compositionally biased toward basic and acidic residues; the sequence is PSHEDEDLPPRNEIDPPRKRVD. 3 disordered regions span residues 346–476, 493–514, and 682–735; these read PSHE…GVPW, FHRR…PESS, and KNGQ…REQP. A phosphoserine mark is found at Ser368, Ser383, Ser394, Ser413, Ala417, Ser424, and Ser428. Positions 411–429 are enriched in low complexity; sequence SRSISGASSGLSTSPLSSP. Positions 432–446 are enriched in pro residues; it reads TPHPSPRGSPLPTPK. Phosphoserine is present on Ser456. 3 positions are modified to phosphothreonine: Thr460, Thr464, and Thr510. Ser513 and Ser514 each carry phosphoserine.

The protein belongs to the protein kinase superfamily. CAMK Ser/Thr protein kinase family. SNF1 subfamily. Interacts with FZR1, a regulatory subunit of the APC ubiquitin ligase complex. Interacts with COPS5. Interacts with PAK1. Requires Mg(2+) as cofactor. Post-translationally, may be phosphorylated at Thr-261 by PKA. Phosphorylated at Thr-175 by STK11/LKB1 in complex with STE20-related adapter-alpha (STRADA) pseudo kinase and CAB39. Not phosphorylated at Thr-175 by CaMKK2. In contrast, it is phosphorylated and activated by CaMKK1. May be inactivated via dephosphorylation of Thr-175 by PP2C. In terms of processing, polyubiquitinated by the APC complex in conjunction with FZR1, leading to its proteasomal degradation. Targeted for proteasomal degradation by interaction with COPS5. BRSK2 levels change during the cell cycle. BRSK2 levels are low at the G1/S boundary and gradually increase as cells progress into G2 phase. BRSK2 levels decrease rapidly at the end of mitosis.

The protein resides in the cytoplasm. It is found in the cytoskeleton. Its subcellular location is the microtubule organizing center. The protein localises to the centrosome. It localises to the perinuclear region. The protein resides in the endoplasmic reticulum. The enzyme catalyses L-seryl-[protein] + ATP = O-phospho-L-seryl-[protein] + ADP + H(+). It catalyses the reaction L-threonyl-[protein] + ATP = O-phospho-L-threonyl-[protein] + ADP + H(+). It carries out the reaction L-seryl-[tau protein] + ATP = O-phospho-L-seryl-[tau protein] + ADP + H(+). The catalysed reaction is L-threonyl-[tau protein] + ATP = O-phospho-L-threonyl-[tau protein] + ADP + H(+). With respect to regulation, activated by phosphorylation on Thr-175 by STK11/LKB1. Serine/threonine-protein kinase that plays a key role in polarization of neurons and axonogenesis, cell cycle progress and insulin secretion. Phosphorylates CDK16, CDC25C, MAPT/TAU, PAK1 and WEE1. Following phosphorylation and activation by STK11/LKB1, acts as a key regulator of polarization of cortical neurons, probably by mediating phosphorylation of microtubule-associated proteins such as MAPT/TAU at 'Thr-523' and 'Ser-573'. Also regulates neuron polarization by mediating phosphorylation of WEE1 at 'Ser-642' in post-mitotic neurons, leading to down-regulate WEE1 activity in polarized neurons. Plays a role in the regulation of the mitotic cell cycle progress and the onset of mitosis. Plays a role in the regulation of insulin secretion in response to elevated glucose levels, probably via phosphorylation of CDK16 and PAK1. While BRSK2 phosphorylated at Thr-175 can inhibit insulin secretion, BRSK2 phosphorylated at Thr-261 can promote insulin secretion. Regulates reorganization of the actin cytoskeleton. May play a role in the apoptotic response triggered by endoplasmic reticulum (ER) stress. The polypeptide is Serine/threonine-protein kinase BRSK2 (Brsk2) (Rattus norvegicus (Rat)).